The chain runs to 89 residues: Pyrin domain-containing protein 1 (89 aa).

One can recognise a Pyrin domain in the interval 1 to 89 (MGTKREAILK…EEAARLQRAA (89 aa)).

As to quaternary structure, interacts with PYCARD/ASC (via pyrin domain). Post-translationally, phosphorylated. In terms of tissue distribution, predominantly expressed in monocytes, macrophages and granulocytes.

It is found in the cytoplasm. Associates with PYCARD/ASC and modulates its ability to collaborate with MEFV/pyrin and NLRP3/cryopyrin in NF-kappa-B and pro-caspase-1 activation. Suppresses kinase activity of NF-kappa-B inhibitor kinase (IKK) complex, expression of NF-kappa-B inducible genes and inhibits NF-kappa-B activation by cytokines and LPS. This is Pyrin domain-containing protein 1 from Homo sapiens (Human).